The sequence spans 543 residues: Putative inorganic phosphate export protein YjbB (543 aa).

Transmembrane regions (helical) follow at residues 1-21 (MLTL…THIV), 48-68 (FCAG…TMLV), 76-96 (LVAL…TALM), 99-119 (ILTF…VIFF), 134-154 (GIGL…VTPI), 175-195 (ALIG…VLLT), 196-216 (ATLT…VIGA), 240-260 (LGSL…VHLL), and 274-294 (LVIY…LPFV).

This sequence belongs to the YjbB family.

It is found in the cell inner membrane. It catalyses the reaction phosphate(in) = phosphate(out). Its function is as follows. Might be involved in phosphate export. Overproduction of YjbB reduces the elevated levels of polyphosphate (polyP) in a phoU mutant that accumulates 1000-fold higher levels of polyP than the wild type, suggesting that YjbB exports excess intracellular phosphate (Pi) in the phoU mutant and thus reduces the levels of polyP. The sequence is that of Putative inorganic phosphate export protein YjbB (yjbB) from Escherichia coli (strain K12).